We begin with the raw amino-acid sequence, 822 residues long: Structure-specific endonuclease subunit SLX4 (822 aa).

Disordered regions lie at residues M1–S39, T73–L117, G277–D362, R390–S418, K456–L507, and K589–S676. Over residues S13 to S39 the composition is skewed to polar residues. The span at N280–K294 shows a compositional bias: low complexity. The segment covering V310–Q320 has biased composition (polar residues). The span at G342–N354 shows a compositional bias: basic residues. The span at S460–T470 shows a compositional bias: low complexity. Residues N471–N484 are compositionally biased toward polar residues. A compositionally biased stretch (low complexity) spans S490–Q506. Positions K589 to K612 are enriched in polar residues. Over residues T627–Q636 the composition is skewed to basic residues. A compositionally biased stretch (low complexity) spans K637–A650.

It belongs to the SLX4 family. As to quaternary structure, forms a heterodimer with SLX1. Post-translationally, phosphorylated in response to DNA damage.

It localises to the nucleus. Functionally, regulatory subunit of the SLX1-SLX4 structure-specific endonuclease that resolves DNA secondary structures generated during DNA repair and recombination. Has endonuclease activity towards branched DNA substrates, introducing single-strand cuts in duplex DNA close to junctions with ss-DNA. This is Structure-specific endonuclease subunit SLX4 from Coccidioides immitis (strain RS) (Valley fever fungus).